The sequence spans 544 residues: Chaperonin GroEL (544 aa).

ATP is bound by residues 30–33, K51, 87–91, G415, and D495; these read TLGP and DGTTT.

Belongs to the chaperonin (HSP60) family. In terms of assembly, forms a cylinder of 14 subunits composed of two heptameric rings stacked back-to-back. Interacts with the co-chaperonin GroES.

It is found in the cytoplasm. It carries out the reaction ATP + H2O + a folded polypeptide = ADP + phosphate + an unfolded polypeptide.. Together with its co-chaperonin GroES, plays an essential role in assisting protein folding. The GroEL-GroES system forms a nano-cage that allows encapsulation of the non-native substrate proteins and provides a physical environment optimized to promote and accelerate protein folding. This Neisseria meningitidis serogroup B (strain ATCC BAA-335 / MC58) protein is Chaperonin GroEL.